Consider the following 337-residue polypeptide: RAD51-associated protein 1 (337 aa).

2 disordered regions span residues 1–69 (MVRP…PPKK) and 88–337 (LSVK…SQVR). Ser19 and Ser23 each carry phosphoserine. The segment covering 28 to 38 (ISSSTPVNKSK) has biased composition (polar residues). Residues 32-50 (TPVNKSKTVPKVLKQDKPK) are interaction with DNA. Over residues 44 to 69 (LKQDKPKPNLKNLQKEEVLPTEPPKK) the composition is skewed to basic and acidic residues. Ser103 and Ser107 each carry phosphoserine. Residues 105 to 118 (EKSTDKQGKEKTEN) show a composition bias toward basic and acidic residues. The SIM motif signature appears at 138–143 (LDKITE). A compositionally biased stretch (acidic residues) spans 190 to 205 (SESDPDFDESKESDED). Residues 225 to 286 (GEKKERKSKP…PSAESKRPKW (62 aa)) form an interaction with DNA region. Residue Lys251 forms a Glycyl lysine isopeptide (Lys-Gly) (interchain with G-Cter in SUMO; alternate) linkage. Lys251 participates in a covalent cross-link: Glycyl lysine isopeptide (Lys-Gly) (interchain with G-Cter in ubiquitin; alternate). The short motif at 286–289 (WVPP) is the WVPP motif element. Residues 290–304 (AASGSRNSSSNALAG) show a composition bias toward low complexity. The segment at 295–334 (RNSSSNALAGTPAKSPSQSLRLGLSRLAPVKRLHPSATSS) is interaction with RAD51. The residue at position 309 (Ser309) is a Phosphoserine.

As to quaternary structure, monomer; elongated monodisperse monomer. Interacts (via C-terminal region) with RAD51; the interaction is direct. Interacts (via SIM motif) with WDR48/UAF1; WDR48/UAF1 and RAD51AP1 cooperate together to stimulate RAD51-mediated homologous recombination (HR). Interacts (via WVPP motif) with DMC1; the interaction is direct. Interacts with PALB2. Interacts with RAD52. Sumoylation with SUMO2/3 by NSMCE2/MMS21 promotes stabilization, possibly by preventing ubiquitination. Most abundantly expressed in testis. Also expressed in spleen, thymus and bone marrow. Not detected in heart, kidney or liver.

Its subcellular location is the chromosome. It is found in the nucleus. The protein localises to the telomere. Functionally, structure-specific DNA-binding protein involved in DNA repair by promoting RAD51-mediated homologous recombination. Acts by stimulating D-Loop formation by RAD51: specifically enhances joint molecule formation through its structure-specific DNA interaction and its interaction with RAD51. Binds single-stranded DNA (ssDNA), double-stranded DNA (dsDNA) and secondary DNA structures, such as D-loop structures: has a strong preference for branched-DNA structures that are obligatory intermediates during joint molecule formation. Cooperates with WDR48/UAF1 to stimulate RAD51-mediated homologous recombination: both WDR48/UAF1 and RAD51AP1 have coordinated role in DNA-binding during homologous recombination and DNA repair. WDR48/UAF1 and RAD51AP1 also have a coordinated role in DNA-binding to promote USP1-mediated deubiquitination of FANCD2. Also involved in meiosis by promoting DMC1-mediated homologous meiotic recombination. This Mus musculus (Mouse) protein is RAD51-associated protein 1.